Consider the following 272-residue polypeptide: Hematopoietically-expressed homeobox protein hhex (272 aa).

The homeobox DNA-binding region spans 137–196 (RKGGQVRFSNDQTIELEKKFETQKYLSPPERKRLAKMLQLSERQVKTWFQNRRAKWRRLK). A disordered region spans residues 222–272 (CLSAEQKSRESSLDDPTSSPTSQGNLDSEVSDDSDQEVDIEGDKGYYNCAH). Over residues 250–261 (EVSDDSDQEVDI) the composition is skewed to acidic residues.

First expressed in the dorsal endomesoderm of the gastrula stage embryo. The dorsal endomesoderm contributes to forming the embryonic liver, and expression continues in the liver throughout development. Also expressed in precursors of the developing thyroid gland, and beginning at the tailbud stage, expressed in the ventral region of the head. Also transiently expressed in the endothelial layer of developing vascular tissues of the embryo, beginning at the tailbud stages.

It localises to the nucleus. In terms of biological role, recognizes the DNA sequence 5'-ATTAA-3'. Transcriptional repressor. Regulates the differentiation of both endothelial and blood cells. Probably plays a role in the proliferation of vascular endothelial cells during blood vessel development. Establishes anterior identity at two levels; acts early to enhance canonical wnt-signaling by repressing expression of tle4, and acts later to inhibit nodal-signaling by directly targeting nodal/nr1 and nodal2/nr2. May play a role in liver development. Induces heart development. This is Hematopoietically-expressed homeobox protein hhex from Xenopus laevis (African clawed frog).